The sequence spans 166 residues: Cofilin-2 (166 aa).

Residues 4–153 form the ADF-H domain; that stretch reads GVTVNDEVIK…KDRSTLGEKL (150 aa). Position 24 is a phosphoserine (Ser24). Residues 30–34 carry the Nuclear localization signal motif; that stretch reads KKRKK.

This sequence belongs to the actin-binding proteins ADF family. Post-translationally, the phosphorylation of Ser-24 may prevent recognition of the nuclear localization signal. In terms of tissue distribution, widely distributed in various tissues.

It is found in the nucleus matrix. The protein resides in the cytoplasm. It localises to the cytoskeleton. In terms of biological role, controls reversibly actin polymerization and depolymerization in a pH-sensitive manner. It has the ability to bind G- and F-actin in a 1:1 ratio of cofilin to actin. It is the major component of intranuclear and cytoplasmic actin rods. This Gallus gallus (Chicken) protein is Cofilin-2 (CFL2).